Reading from the N-terminus, the 321-residue chain is Ribose-phosphate pyrophosphokinase (321 aa).

ATP contacts are provided by residues 39 to 41 (DGE) and 98 to 99 (RQ). The Mg(2+) site is built by histidine 132 and aspartate 170. Lysine 195 is a catalytic residue. D-ribose 5-phosphate is bound by residues arginine 197, aspartate 221, and 225 to 229 (DTGGT).

This sequence belongs to the ribose-phosphate pyrophosphokinase family. Class I subfamily. As to quaternary structure, homohexamer. Mg(2+) serves as cofactor.

The protein resides in the cytoplasm. It catalyses the reaction D-ribose 5-phosphate + ATP = 5-phospho-alpha-D-ribose 1-diphosphate + AMP + H(+). Its pathway is metabolic intermediate biosynthesis; 5-phospho-alpha-D-ribose 1-diphosphate biosynthesis; 5-phospho-alpha-D-ribose 1-diphosphate from D-ribose 5-phosphate (route I): step 1/1. Its function is as follows. Involved in the biosynthesis of the central metabolite phospho-alpha-D-ribosyl-1-pyrophosphate (PRPP) via the transfer of pyrophosphoryl group from ATP to 1-hydroxyl of ribose-5-phosphate (Rib-5-P). The sequence is that of Ribose-phosphate pyrophosphokinase from Mycoplasmopsis pulmonis (strain UAB CTIP) (Mycoplasma pulmonis).